Reading from the N-terminus, the 138-residue chain is Acidic phospholipase A2 Ts-A6 (138 aa).

Residues Met-1–Gly-16 form the signal peptide. Disulfide bonds link Cys-42/Cys-131, Cys-44/Cys-60, Cys-59/Cys-111, Cys-65/Cys-138, Cys-66/Cys-104, Cys-73/Cys-97, and Cys-91/Cys-102. Ca(2+)-binding residues include Tyr-43, Gly-45, and Gly-47. His-63 is an active-site residue. Asp-64 serves as a coordination point for Ca(2+). Asp-105 is an active-site residue.

The cofactor is Ca(2+). Expressed by the venom gland.

It is found in the secreted. It carries out the reaction a 1,2-diacyl-sn-glycero-3-phosphocholine + H2O = a 1-acyl-sn-glycero-3-phosphocholine + a fatty acid + H(+). Its function is as follows. Snake venom phospholipase A2 (PLA2) that shows a moderate inhibition of ADP-induced human platelet aggregation when tested on platelet rich plasma. Exhibits high hydrolytic activities and prefers the anionic micelles (dPPC with deoxycholate) to the zwitterionic micelles (dPPC with Triton X-100). PLA2 catalyzes the calcium-dependent hydrolysis of the 2-acyl groups in 3-sn-phosphoglycerides. The protein is Acidic phospholipase A2 Ts-A6 of Trimeresurus stejnegeri (Chinese green tree viper).